The chain runs to 347 residues: UDP-3-O-acylglucosamine N-acyltransferase (347 aa).

Histidine 241 functions as the Proton acceptor in the catalytic mechanism.

This sequence belongs to the transferase hexapeptide repeat family. LpxD subfamily. As to quaternary structure, homotrimer.

The catalysed reaction is a UDP-3-O-[(3R)-3-hydroxyacyl]-alpha-D-glucosamine + a (3R)-hydroxyacyl-[ACP] = a UDP-2-N,3-O-bis[(3R)-3-hydroxyacyl]-alpha-D-glucosamine + holo-[ACP] + H(+). The protein operates within bacterial outer membrane biogenesis; LPS lipid A biosynthesis. Functionally, catalyzes the N-acylation of UDP-3-O-acylglucosamine using 3-hydroxyacyl-ACP as the acyl donor. Is involved in the biosynthesis of lipid A, a phosphorylated glycolipid that anchors the lipopolysaccharide to the outer membrane of the cell. This chain is UDP-3-O-acylglucosamine N-acyltransferase, found in Nitrosococcus oceani (strain ATCC 19707 / BCRC 17464 / JCM 30415 / NCIMB 11848 / C-107).